The chain runs to 66 residues: Phylloseptin-H8 (66 aa).

Positions 1 to 22 (MAFLKKSLFLVLFLGLVSLSIC) are cleaved as a signal peptide. Residues 23–44 (EEEKRETEEEENDQEEDDKSEE) constitute a propeptide that is removed on maturation. Residues 25–44 (EKRETEEEENDQEEDDKSEE) form a disordered region. Positions 30-41 (EEEENDQEEDDK) are enriched in acidic residues. L65 is modified (leucine amide).

As to expression, expressed by the skin glands.

It localises to the secreted. In terms of biological role, has antimicrobial activity. This Pithecopus hypochondrialis (Orange-legged leaf frog) protein is Phylloseptin-H8.